Consider the following 166-residue polypeptide: Cyanate hydratase (166 aa).

Catalysis depends on residues R92, E95, and S118.

Belongs to the cyanase family.

The catalysed reaction is cyanate + hydrogencarbonate + 3 H(+) = NH4(+) + 2 CO2. Catalyzes the reaction of cyanate with bicarbonate to produce ammonia and carbon dioxide. In Sorghum bicolor (Sorghum), this protein is Cyanate hydratase.